We begin with the raw amino-acid sequence, 810 residues long: Phenylalanine--tRNA ligase beta subunit (810 aa).

Residues 39-154 (APPTEKIVVG…EGTPVGQDIR (116 aa)) enclose the tRNA-binding domain. The 76-residue stretch at 405–480 (PQRAPVSMRA…RIYGFEKIPA (76 aa)) folds into the B5 domain. Mg(2+) is bound by residues Asp458, Asp464, Glu467, and Glu468. The FDX-ACB domain maps to 707–809 (SKFPPVRRDI…MARVYGARLR (103 aa)).

Belongs to the phenylalanyl-tRNA synthetase beta subunit family. Type 1 subfamily. Tetramer of two alpha and two beta subunits. Mg(2+) serves as cofactor.

Its subcellular location is the cytoplasm. It carries out the reaction tRNA(Phe) + L-phenylalanine + ATP = L-phenylalanyl-tRNA(Phe) + AMP + diphosphate + H(+). The chain is Phenylalanine--tRNA ligase beta subunit from Burkholderia pseudomallei (strain 1710b).